The chain runs to 286 residues: Phycobilisome 32.1 kDa linker polypeptide, phycocyanin-associated, rod (286 aa).

The PBS-linker domain occupies A2 to R180. Positions D234–A286 constitute a CpcD-like domain.

Belongs to the phycobilisome linker protein family. As to quaternary structure, associated with the phycobilisome, a hemidiscoidal structure that is composed of two distinct substructures: a core complex and a number of rods radiating from the core.

The protein resides in the cellular thylakoid membrane. Its function is as follows. Rod linker protein, associated with phycocyanin. Linker polypeptides determine the state of aggregation and the location of the disk-shaped phycobiliprotein units within the phycobilisome and modulate their spectroscopic properties in order to mediate a directed and optimal energy transfer. This is Phycobilisome 32.1 kDa linker polypeptide, phycocyanin-associated, rod (cpcC) from Nostoc sp. (strain PCC 7120 / SAG 25.82 / UTEX 2576).